Here is a 372-residue protein sequence, read N- to C-terminus: tRNA-specific 2-thiouridylase MnmA (372 aa).

ATP is bound by residues 11–18 (GMSGGVDS) and methionine 37. Residues 97–99 (NPD) form an interaction with target base in tRNA region. Residue cysteine 102 is the Nucleophile of the active site. Cysteines 102 and 199 form a disulfide. Glycine 126 contacts ATP. Positions 149–151 (KDQ) are interaction with tRNA. The active-site Cysteine persulfide intermediate is the cysteine 199. Residues 309–310 (RY) are interaction with tRNA.

The protein belongs to the MnmA/TRMU family.

It is found in the cytoplasm. The catalysed reaction is S-sulfanyl-L-cysteinyl-[protein] + uridine(34) in tRNA + AH2 + ATP = 2-thiouridine(34) in tRNA + L-cysteinyl-[protein] + A + AMP + diphosphate + H(+). Functionally, catalyzes the 2-thiolation of uridine at the wobble position (U34) of tRNA, leading to the formation of s(2)U34. This chain is tRNA-specific 2-thiouridylase MnmA, found in Staphylococcus aureus (strain USA300).